The chain runs to 257 residues: Pyridoxine 5'-phosphate synthase (257 aa).

Position 6 (Asn-6) interacts with 3-amino-2-oxopropyl phosphate. Position 8-9 (8-9 (DH)) interacts with 1-deoxy-D-xylulose 5-phosphate. 3-amino-2-oxopropyl phosphate is bound at residue Arg-17. His-41 acts as the Proton acceptor in catalysis. 1-deoxy-D-xylulose 5-phosphate contacts are provided by Arg-43 and His-48. Glu-68 acts as the Proton acceptor in catalysis. Residue Thr-98 coordinates 1-deoxy-D-xylulose 5-phosphate. Residue His-210 is the Proton donor of the active site. 3-amino-2-oxopropyl phosphate contacts are provided by residues Gly-211 and 232-233 (GQ).

Belongs to the PNP synthase family. As to quaternary structure, homooctamer; tetramer of dimers.

The protein resides in the cytoplasm. The catalysed reaction is 3-amino-2-oxopropyl phosphate + 1-deoxy-D-xylulose 5-phosphate = pyridoxine 5'-phosphate + phosphate + 2 H2O + H(+). Its pathway is cofactor biosynthesis; pyridoxine 5'-phosphate biosynthesis; pyridoxine 5'-phosphate from D-erythrose 4-phosphate: step 5/5. Functionally, catalyzes the complicated ring closure reaction between the two acyclic compounds 1-deoxy-D-xylulose-5-phosphate (DXP) and 3-amino-2-oxopropyl phosphate (1-amino-acetone-3-phosphate or AAP) to form pyridoxine 5'-phosphate (PNP) and inorganic phosphate. The sequence is that of Pyridoxine 5'-phosphate synthase from Campylobacter jejuni (strain RM1221).